An 817-amino-acid polypeptide reads, in one-letter code: DNA-directed RNA polymerase subunit beta'' (817 aa).

Residues Cys219, Cys291, Cys298, and Cys301 each contribute to the Zn(2+) site.

It belongs to the RNA polymerase beta' chain family. RpoC2 subfamily. In plastids the minimal PEP RNA polymerase catalytic core is composed of four subunits: alpha, beta, beta', and beta''. When a (nuclear-encoded) sigma factor is associated with the core the holoenzyme is formed, which can initiate transcription. Requires Zn(2+) as cofactor.

The protein resides in the plastid. The enzyme catalyses RNA(n) + a ribonucleoside 5'-triphosphate = RNA(n+1) + diphosphate. Its function is as follows. DNA-dependent RNA polymerase catalyzes the transcription of DNA into RNA using the four ribonucleoside triphosphates as substrates. This chain is DNA-directed RNA polymerase subunit beta'' (rpoC2), found in Euglena longa (Euglenophycean alga).